Consider the following 327-residue polypeptide: GMP reductase (327 aa).

Cys176 serves as the catalytic Thioimidate intermediate. 205–228 contacts NADP(+); that stretch reads IIADGGIRTHGDIVKSIRFGATMV.

The protein belongs to the IMPDH/GMPR family. GuaC type 2 subfamily.

The catalysed reaction is IMP + NH4(+) + NADP(+) = GMP + NADPH + 2 H(+). Catalyzes the irreversible NADPH-dependent deamination of GMP to IMP. It functions in the conversion of nucleobase, nucleoside and nucleotide derivatives of G to A nucleotides, and in maintaining the intracellular balance of A and G nucleotides. The polypeptide is GMP reductase (Helicobacter pylori (strain ATCC 700392 / 26695) (Campylobacter pylori)).